The sequence spans 267 residues: Mediator of RNA polymerase II transcription subunit 8 (267 aa).

Coiled coils occupy residues 2–27 (QQREEKQLEAFLESLVARVAHLKGSL) and 118–163 (VEEQ…EDRD). Over residues 156–165 (NNPREDRDSE) the composition is skewed to basic and acidic residues. Disordered stretches follow at residues 156–180 (NNPREDRDSETSALRQNKPSFNPAD) and 227–267 (ASGH…PYNR). A compositionally biased stretch (polar residues) spans 166–180 (TSALRQNKPSFNPAD). The span at 236–247 (GPVAPQQPGQPG) shows a compositional bias: low complexity.

This sequence belongs to the Mediator complex subunit 8 family. As to quaternary structure, component of the Mediator complex. May be part of a multisubunit E3 ubiquitin-protein ligase complex.

The protein localises to the nucleus. Its pathway is protein modification; protein ubiquitination. Component of the Mediator complex, a coactivator involved in the regulated transcription of nearly all RNA polymerase II-dependent genes. Mediator functions as a bridge to convey information from gene-specific regulatory proteins to the basal RNA polymerase II transcription machinery. Mediator is recruited to promoters by direct interactions with regulatory proteins and serves as a scaffold for the assembly of a functional preinitiation complex with RNA polymerase II and the general transcription factors. May play a role as a target recruitment subunit in E3 ubiquitin-protein ligase complexes and thus in ubiquitination and subsequent proteasomal degradation of target proteins. The protein is Mediator of RNA polymerase II transcription subunit 8 (med8) of Danio rerio (Zebrafish).